Reading from the N-terminus, the 468-residue chain is Probable soluble pyridine nucleotide transhydrogenase (468 aa).

Residue 33–42 (ERGRMLGGVC) coordinates FAD.

The protein belongs to the class-I pyridine nucleotide-disulfide oxidoreductase family. Requires FAD as cofactor.

Its subcellular location is the cytoplasm. The enzyme catalyses NAD(+) + NADPH = NADH + NADP(+). Its function is as follows. Conversion of NADPH, generated by peripheral catabolic pathways, to NADH, which can enter the respiratory chain for energy generation. In Mycobacterium bovis (strain ATCC BAA-935 / AF2122/97), this protein is Probable soluble pyridine nucleotide transhydrogenase (sthA).